The sequence spans 302 residues: MTIFARDLIYRIETKVLLPLFLVHLLPYVTCQQESESVDRNRKTNFPTETVIAIIVLAIFISLSMVACFLHKTFYRAEVEAASQEVFHSRARRGLEKELVESFPIFLYSEVKGLKIGKGGVECAICLSEFVDKETLRWMPPCSHTFHANCIDVWLSSQSTCPACRANLSLKPGESYPYPITDLETGNEQRDEHSLLQLGTNLDRFTLQLPEEMQRQLVSLNLIRTSNMTLPRAMSSRQGYRSGFSHGRQTLRRAISMSLSFSLQAASVRSTVGRDDLVLETSQAKDKDLCEQSFQHLMPEKV.

Residues 1-31 (MTIFARDLIYRIETKVLLPLFLVHLLPYVTC) form the signal peptide. The helical transmembrane segment at 50–70 (TVIAIIVLAIFISLSMVACFL) threads the bilayer. An RING-type; atypical zinc finger spans residues 123–165 (CAICLSEFVDKETLRWMPPCSHTFHANCIDVWLSSQSTCPACR). Residue S226 is modified to Phosphoserine.

Belongs to the RING-type zinc finger family. ATL subfamily.

It is found in the membrane. It catalyses the reaction S-ubiquitinyl-[E2 ubiquitin-conjugating enzyme]-L-cysteine + [acceptor protein]-L-lysine = [E2 ubiquitin-conjugating enzyme]-L-cysteine + N(6)-ubiquitinyl-[acceptor protein]-L-lysine.. Its pathway is protein modification; protein ubiquitination. The protein is Putative RING-H2 finger protein ATL35 (ATL35) of Arabidopsis thaliana (Mouse-ear cress).